The chain runs to 156 residues: Large ribosomal subunit protein uL15 (156 aa).

Residues Met1–Arg16 show a composition bias toward basic residues. The segment at Met1 to Lys35 is disordered.

It belongs to the universal ribosomal protein uL15 family. In terms of assembly, part of the 50S ribosomal subunit.

In terms of biological role, binds to the 23S rRNA. In Pyrobaculum neutrophilum (strain DSM 2338 / JCM 9278 / NBRC 100436 / V24Sta) (Thermoproteus neutrophilus), this protein is Large ribosomal subunit protein uL15.